We begin with the raw amino-acid sequence, 1126 residues long: Replication protein 1a (1126 aa).

The segment at 69–406 is methyltransferase; that stretch reads SFSLDATQQN…HTIIGGVTLI (338 aa). The Alphavirus-like MT domain maps to 90-278; it reads VFSNSSSSSH…HRFSLLKHYL (189 aa). A (+)RNA virus helicase ATP-binding domain is found at 806 to 963; sequence DQSCVFASAE…HKLTGKVERK (158 aa). The ATP-dependent helicase stretch occupies residues 834-1094; it reads TIVDGVAGCG…RHKKTFKYFT (261 aa). Position 838–845 (838–845) interacts with ATP; sequence GVAGCGKT. Residues 964–1125 form the (+)RNA virus helicase C-terminal domain; the sequence is LITWRSPADA…SILARSYNHN (162 aa).

It belongs to the bromoviridae replication protein 1a family. In terms of assembly, interacts with RNA-directed RNA polymerase 2a.

The protein localises to the host endoplasmic reticulum membrane. Its function is as follows. Involved in the virus replication. Contains a helicase domain and a methyltransferase domain. The methyltransferase domain is probably involved in viral RNA capping. Involved in the formation of ER membrane spherular invaginations in which RNA replication complexes form. The sequence is that of Replication protein 1a from Alfalfa mosaic virus (AMV).